A 122-amino-acid polypeptide reads, in one-letter code: Large ribosomal subunit protein uL14 (122 aa).

The protein belongs to the universal ribosomal protein uL14 family. In terms of assembly, part of the 50S ribosomal subunit. Forms a cluster with proteins L3 and L19. In the 70S ribosome, L14 and L19 interact and together make contacts with the 16S rRNA in bridges B5 and B8.

Its function is as follows. Binds to 23S rRNA. Forms part of two intersubunit bridges in the 70S ribosome. The protein is Large ribosomal subunit protein uL14 of Geobacillus sp. (strain WCH70).